A 366-amino-acid chain; its full sequence is Carbamoyl phosphate synthase small chain (366 aa).

The interval 1 to 172 (MYGILVLEDG…TYNAENEKTS (172 aa)) is CPSase. L-glutamine contacts are provided by Ser45, Gly220, and Gly222. The Glutamine amidotransferase type-1 domain maps to 172-363 (SCVLIDCGVK…VELGIKFKAE (192 aa)). Cys247 acts as the Nucleophile in catalysis. L-glutamine is bound by residues Leu248, Gln251, Asn289, Gly291, and Phe292. Catalysis depends on residues His336 and Glu338.

This sequence belongs to the CarA family. As to quaternary structure, composed of two chains; the small (or glutamine) chain promotes the hydrolysis of glutamine to ammonia, which is used by the large (or ammonia) chain to synthesize carbamoyl phosphate. Tetramer of heterodimers (alpha,beta)4.

It carries out the reaction hydrogencarbonate + L-glutamine + 2 ATP + H2O = carbamoyl phosphate + L-glutamate + 2 ADP + phosphate + 2 H(+). The catalysed reaction is L-glutamine + H2O = L-glutamate + NH4(+). Its pathway is amino-acid biosynthesis; L-arginine biosynthesis; carbamoyl phosphate from bicarbonate: step 1/1. It functions in the pathway pyrimidine metabolism; UMP biosynthesis via de novo pathway; (S)-dihydroorotate from bicarbonate: step 1/3. Small subunit of the glutamine-dependent carbamoyl phosphate synthetase (CPSase). CPSase catalyzes the formation of carbamoyl phosphate from the ammonia moiety of glutamine, carbonate, and phosphate donated by ATP, constituting the first step of 2 biosynthetic pathways, one leading to arginine and/or urea and the other to pyrimidine nucleotides. The small subunit (glutamine amidotransferase) binds and cleaves glutamine to supply the large subunit with the substrate ammonia. This is Carbamoyl phosphate synthase small chain from Methanococcus maripaludis (strain C7 / ATCC BAA-1331).